The sequence spans 338 residues: DNA-directed RNA polymerase subunit alpha (338 aa).

Positions 1–226 (MLIAQRPSLT…ELFGLARELN (226 aa)) are alpha N-terminal domain (alpha-NTD). An alpha C-terminal domain (alpha-CTD) region spans residues 243-338 (LAADLVMPIE…DAGFLETEHY (96 aa)).

This sequence belongs to the RNA polymerase alpha chain family. As to quaternary structure, homodimer. The RNAP catalytic core consists of 2 alpha, 1 beta, 1 beta' and 1 omega subunit. When a sigma factor is associated with the core the holoenzyme is formed, which can initiate transcription.

The enzyme catalyses RNA(n) + a ribonucleoside 5'-triphosphate = RNA(n+1) + diphosphate. In terms of biological role, DNA-dependent RNA polymerase catalyzes the transcription of DNA into RNA using the four ribonucleoside triphosphates as substrates. In Streptomyces avermitilis (strain ATCC 31267 / DSM 46492 / JCM 5070 / NBRC 14893 / NCIMB 12804 / NRRL 8165 / MA-4680), this protein is DNA-directed RNA polymerase subunit alpha.